Consider the following 457-residue polypeptide: RuvB-like helicase 1 (457 aa).

Residue 73 to 80 participates in ATP binding; sequence GGPSTGKT.

Belongs to the RuvB family. As to quaternary structure, may form heterododecamers with RVB2. Component of the SWR1 chromatin remodeling complex, the INO80 chromatin remodeling complex, and of the R2TP complex.

The protein localises to the nucleus. The catalysed reaction is ATP + H2O = ADP + phosphate + H(+). Its function is as follows. DNA helicase which participates in several chromatin remodeling complexes, including the SWR1 and the INO80 complexes. The SWR1 complex mediates the ATP-dependent exchange of histone H2A for the H2A variant HZT1 leading to transcriptional regulation of selected genes by chromatin remodeling. The INO80 complex remodels chromatin by shifting nucleosomes and is involved in DNA repair. Also involved in pre-rRNA processing. The polypeptide is RuvB-like helicase 1 (RVB1) (Kluyveromyces lactis (strain ATCC 8585 / CBS 2359 / DSM 70799 / NBRC 1267 / NRRL Y-1140 / WM37) (Yeast)).